We begin with the raw amino-acid sequence, 592 residues long: Syntaxin-binding protein 3 (592 aa).

The tract at residues 1–255 is mediates interaction with DOC2B; the sequence is MAPPVAERGL…STVLHELTFQ (255 aa).

It belongs to the STXBP/unc-18/SEC1 family. As to quaternary structure, interacts with DOC2B; the interaction is direct, occurs at the cell membrane, excludes interaction with STX4 and regulates glucose-stimulated insulin secretion. Interacts with STX4. Phosphorylated by PKC in platelets in response to thrombin stimulation; phosphorylation inhibits binding to STX4. Megakaryocytes and platelets.

The protein localises to the cytoplasm. It localises to the cytosol. It is found in the cell membrane. Functionally, together with STX4 and VAMP2, may play a role in insulin-dependent movement of GLUT4 and in docking/fusion of intracellular GLUT4-containing vesicles with the cell surface in adipocytes. The chain is Syntaxin-binding protein 3 (STXBP3) from Homo sapiens (Human).